A 195-amino-acid chain; its full sequence is ALK and LTK ligand 2b (195 aa).

2 disulfide bridges follow: C156-C192 and C170-C179.

This sequence belongs to the ALKAL family. Homodimer. As to expression, highly expressed in the swim bladder and single cells of unknown identity in the head.

The protein localises to the secreted. The protein resides in the cell membrane. Functionally, cytokine that acts as a physiological ligand for receptor tyrosine kinases LTK and ALK. Required for neural crest cell differentiation and iridophore development during embryonic iridophore development and adult stripe development by acting as a receptor for LTK. Also required for iridophore formation in the adult eye. This chain is ALK and LTK ligand 2b, found in Danio rerio (Zebrafish).